A 486-amino-acid polypeptide reads, in one-letter code: Elastin-binding protein EbpS (486 aa).

Residues 1–40 show a composition bias toward basic and acidic residues; that stretch reads MSNNFKDDFEKNRQSIDTNSHQDHTEDVEKDQSELEHQDT. A disordered region spans residues 1 to 314; that stretch reads MSNNFKDDFE…NHDRDKERKK (314 aa). Residues 2 to 204 are Extracellular-facing; sequence SNNFKDDFEK…EPKEHHNGKK (203 aa). Positions 14-34 are elastin-binding; it reads QSIDTNSHQDHTEDVEKDQSE. Over residues 64–85 the composition is skewed to polar residues; sequence TNHNKQVHNESQTSEDNVQNEA. 2 stretches are compositionally biased toward basic and acidic residues: residues 103–118 and 126–143; these read EPSH…EEYY and DKSH…DTIK. Residues 161-179 show a composition bias toward polar residues; it reads EQSQQPKPYFTTGANQSET. Over residues 180–199 the composition is skewed to basic and acidic residues; sequence SKNEHDNDSVKQDQDEPKEH. The span at 204-225 shows a compositional bias: low complexity; the sequence is KAAAIGAGTAGVAGAAGAMAAS. The chain crosses the membrane as a helical span at residues 205 to 225; that stretch reads AAAIGAGTAGVAGAAGAMAAS. Over 226 to 319 the chain is Cytoplasmic; it reads KAKKHSNDAQ…KERKKGGMAK (94 aa). The segment covering 233-246 has biased composition (polar residues); it reads DAQNKSNSGKANNS. A compositionally biased stretch (basic and acidic residues) spans 247–259; sequence TEDKASQDKSKDH. Residues 278–297 are compositionally biased toward low complexity; sequence GAASKSASAASKPHASNNAS. Residues 299–314 are compositionally biased toward basic and acidic residues; it reads NHDEHDNHDRDKERKK. The helical transmembrane segment at 320–340 threads the bilayer; that stretch reads VLLPLIAAVLIIGALAIFGGM. The Extracellular portion of the chain corresponds to 341 to 486; the sequence is ALNNHNNGTK…IRNGQQIVIP (146 aa). Residues 351-440 form a disordered region; sequence ENKIANTNKN…QRQGGGQRHT (90 aa). Residues 361–398 show a composition bias toward basic and acidic residues; that stretch reads NADESKDKDTSKDASKDKSKSTDSDKSKEDQDKATKDE. Low complexity predominate over residues 403–431; it reads QNNANQANNQAQNNQNQQQANQNQQQQQQ. One can recognise a LysM domain in the interval 437-485; that stretch reads QRHTVNGQENLYRIAIQYYGSGSPENVEKIRRANGLSGNNIRNGQQIVI.

It is found in the cell membrane. Promotes binding of soluble elastin peptides and tropoelastin to S.aureus cells although it is not able to promote bacterial adherence to immobilized elastin and, therefore, is not a microbial surface component recognizing adhesive matrix molecule (MSCRAMM). The protein is Elastin-binding protein EbpS (ebpS) of Staphylococcus aureus (strain USA300).